A 188-amino-acid chain; its full sequence is Protein GrpE (188 aa).

Residues 1–16 show a composition bias toward basic and acidic residues; it reads MEERNEQVVEEVKEAQ. The tract at residues 1 to 31 is disordered; that stretch reads MEERNEQVVEEVKEAQVEEAVTPENSEETVE.

Belongs to the GrpE family. In terms of assembly, homodimer.

The protein localises to the cytoplasm. In terms of biological role, participates actively in the response to hyperosmotic and heat shock by preventing the aggregation of stress-denatured proteins, in association with DnaK and GrpE. It is the nucleotide exchange factor for DnaK and may function as a thermosensor. Unfolded proteins bind initially to DnaJ; upon interaction with the DnaJ-bound protein, DnaK hydrolyzes its bound ATP, resulting in the formation of a stable complex. GrpE releases ADP from DnaK; ATP binding to DnaK triggers the release of the substrate protein, thus completing the reaction cycle. Several rounds of ATP-dependent interactions between DnaJ, DnaK and GrpE are required for fully efficient folding. The protein is Protein GrpE of Bacillus anthracis.